A 256-amino-acid chain; its full sequence is Cell division protein FtsQ (256 aa).

The Cytoplasmic segment spans residues 1-23; the sequence is MIKAVKMNTSFDKEKVRKHLPGA. Residues 24–44 traverse the membrane as a helical segment; the sequence is IFLSLVVITSLWLVISTISWM. Topologically, residues 45-256 are periplasmic; that stretch reads TDEDRLPLSH…SDDVENKEEN (212 aa). The 71-residue stretch at 50–120 folds into the POTRA domain; that stretch reads LPLSHMIIQG…ETIKVFVVEH (71 aa).

This sequence belongs to the FtsQ/DivIB family. FtsQ subfamily. In terms of assembly, part of a complex composed of FtsB, FtsL and FtsQ.

It is found in the cell inner membrane. Essential cell division protein. May link together the upstream cell division proteins, which are predominantly cytoplasmic, with the downstream cell division proteins, which are predominantly periplasmic. May control correct divisome assembly. The chain is Cell division protein FtsQ from Aliivibrio fischeri (strain ATCC 700601 / ES114) (Vibrio fischeri).